A 117-amino-acid polypeptide reads, in one-letter code: MDKKVARIRRASRARHLMREQGATRLVVHRTPRHIYAQVIAPNGSEVLAAASTVEKVIKEQVQYTGNKDAAAIVGKLVAERALAKGIQVVAFDRSGFKYHGRVQVLADAAREAGLQF.

Belongs to the universal ribosomal protein uL18 family. In terms of assembly, part of the 50S ribosomal subunit; part of the 5S rRNA/L5/L18/L25 subcomplex. Contacts the 5S and 23S rRNAs.

This is one of the proteins that bind and probably mediate the attachment of the 5S RNA into the large ribosomal subunit, where it forms part of the central protuberance. In Haemophilus ducreyi (strain 35000HP / ATCC 700724), this protein is Large ribosomal subunit protein uL18.